A 749-amino-acid chain; its full sequence is Catalase-peroxidase 2 (749 aa).

The first 27 residues, 1-27 (MFKRTIPLFAAFTLAISPSIFPNYAHA), serve as a signal peptide directing secretion. Positions 107 to 229 (WHAAGTYRIY…LAATVMGLIY (123 aa)) form a cross-link, tryptophyl-tyrosyl-methioninium (Trp-Tyr) (with M-255). The active-site Proton acceptor is histidine 108. Residues 229–255 (YVNPEGPNGVPDPLAAAEKIRETFGRM) constitute a cross-link (tryptophyl-tyrosyl-methioninium (Tyr-Met) (with W-107)). A heme b-binding site is contributed by histidine 270.

The protein belongs to the peroxidase family. Peroxidase/catalase subfamily. In terms of assembly, homodimer or homotetramer. The cofactor is heme b. Post-translationally, formation of the three residue Trp-Tyr-Met cross-link is important for the catalase, but not the peroxidase activity of the enzyme.

The catalysed reaction is H2O2 + AH2 = A + 2 H2O. The enzyme catalyses 2 H2O2 = O2 + 2 H2O. In terms of biological role, bifunctional enzyme with both catalase and broad-spectrum peroxidase activity. The protein is Catalase-peroxidase 2 of Legionella pneumophila subsp. pneumophila (strain Philadelphia 1 / ATCC 33152 / DSM 7513).